Consider the following 125-residue polypeptide: Large ribosomal subunit protein bL17 (125 aa).

It belongs to the bacterial ribosomal protein bL17 family. In terms of assembly, part of the 50S ribosomal subunit. Contacts protein L32.

This Acinetobacter baumannii (strain AB307-0294) protein is Large ribosomal subunit protein bL17.